The primary structure comprises 215 residues: Adenylate kinase (215 aa).

10–15 (GAGKGT) provides a ligand contact to ATP. Positions 30-59 (STGDIFRKNISENTPLGMEARSYMDKGLLV) are NMP. AMP contacts are provided by residues T31, R36, 57-59 (LLV), 85-88 (GFPR), and Q92. An LID region spans residues 126 to 163 (GRRVCTSCGGSFHIKFNPPTIDGKCNLCGSDIVQRKDD). R127 contacts ATP. Residues C130 and C133 each contribute to the Zn(2+) site. Residue 136 to 137 (SF) coordinates ATP. Residues C150 and C153 each coordinate Zn(2+). AMP contacts are provided by R160 and R171. K199 lines the ATP pocket.

This sequence belongs to the adenylate kinase family. In terms of assembly, monomer.

It localises to the cytoplasm. It carries out the reaction AMP + ATP = 2 ADP. Its pathway is purine metabolism; AMP biosynthesis via salvage pathway; AMP from ADP: step 1/1. Functionally, catalyzes the reversible transfer of the terminal phosphate group between ATP and AMP. Plays an important role in cellular energy homeostasis and in adenine nucleotide metabolism. The chain is Adenylate kinase from Clostridium botulinum (strain Eklund 17B / Type B).